The primary structure comprises 125 residues: Large ribosomal subunit protein bL19 (125 aa).

The protein belongs to the bacterial ribosomal protein bL19 family.

In terms of biological role, this protein is located at the 30S-50S ribosomal subunit interface and may play a role in the structure and function of the aminoacyl-tRNA binding site. In Wolbachia pipientis wMel, this protein is Large ribosomal subunit protein bL19.